Consider the following 542-residue polypeptide: Probable quinate permease (542 aa).

Residues 1-22 lie on the Cytoplasmic side of the membrane; the sequence is MSILALVEDRPTPKEVYNWRIY. A helical transmembrane segment spans residues 23–43; sequence LLAAVASFTSCMIGYDSAFIG. Residues 44 to 66 are Extracellular-facing; that stretch reads TTLALSSFREEFGFNTMSKTAVN. The chain crosses the membrane as a helical span at residues 67–87; it reads LVSANIVSCYQAGAFFGAFLA. The Cytoplasmic portion of the chain corresponds to 88–97; sequence YPVGHFWGRK. The chain crosses the membrane as a helical span at residues 98 to 118; it reads WGLLFSGAIFTLGAGLMLGAD. The Extracellular segment spans residues 119–130; the sequence is GDRGLGLLYGGR. Residues 131–151 form a helical membrane-spanning segment; it reads VLAGLGVGAGSNITPIYISEM. Residues 152–159 lie on the Cytoplasmic side of the membrane; the sequence is APPSIRGR. A helical membrane pass occupies residues 160 to 180; it reads LVGVYELGWQIGGLVGFWINY. Residues 181-193 are Extracellular-facing; the sequence is GVSETLAPSHKQW. A helical transmembrane segment spans residues 194–214; sequence IIPFAVQLIPSGLLLIGAVFL. At 215–285 the chain is on the cytoplasmic side; that stretch reads KESPRWLFSR…AGTNKKVMYR (71 aa). Residues 286–306 traverse the membrane as a helical segment; that stretch reads LFLGSMLFFWQNGSGINAINY. The Extracellular segment spans residues 307–325; it reads YSPTVFKSIGLQGANTSMF. Residues 326–346 form a helical membrane-spanning segment; the sequence is STGIFGVVKTVVTFVWLLYLI. Topologically, residues 347-352 are cytoplasmic; the sequence is DRLGRR. The helical transmembrane segment at 353 to 373 threads the bilayer; sequence LLLLIGAAGASVCLFIVGAYI. Topologically, residues 374–387 are extracellular; sequence KIADPASNPTQEMT. Residues 388 to 408 traverse the membrane as a helical segment; that stretch reads GGGIAAMFFFYLYTVFYTPSW. Over 409–456 the chain is Cytoplasmic; the sequence is NGTPWVMNSEMFEPNMRSLAQACAAASNWFWNFLISRFTPQMFAKMEY. A helical transmembrane segment spans residues 457 to 477; the sequence is GVWFFFASLMVLSIVFVFFLL. Topologically, residues 478–542 are extracellular; that stretch reads PETKGIPLES…EHLSEDLPKV (65 aa). A disordered region spans residues 519 to 542; it reads IEESGYSKTGDQQVEHLSEDLPKV. Positions 531–542 are enriched in basic and acidic residues; sequence QVEHLSEDLPKV.

It belongs to the major facilitator superfamily. Sugar transporter (TC 2.A.1.1) family. Interacts with creB. Post-translationally, ubiquitinated. Deubiquitinated by creB, probably to control its activity or amount.

The protein localises to the cell membrane. Functionally, integral membrane transporter that imports quinic acid to be catabolized as a carbon source. This is Probable quinate permease (qutD) from Neosartorya fischeri (strain ATCC 1020 / DSM 3700 / CBS 544.65 / FGSC A1164 / JCM 1740 / NRRL 181 / WB 181) (Aspergillus fischerianus).